The following is a 62-amino-acid chain: Small ribosomal subunit protein uS14 (62 aa).

Zn(2+)-binding residues include C25, C28, C41, and C44.

The protein belongs to the universal ribosomal protein uS14 family. Zinc-binding uS14 subfamily. Part of the 30S ribosomal subunit. Contacts proteins S3 and S10. The cofactor is Zn(2+).

In terms of biological role, binds 16S rRNA, required for the assembly of 30S particles and may also be responsible for determining the conformation of the 16S rRNA at the A site. The sequence is that of Small ribosomal subunit protein uS14 from Aquifex aeolicus (strain VF5).